A 215-amino-acid polypeptide reads, in one-letter code: uncharacterized protein (215 aa).

It localises to the mitochondrion. This is an uncharacterized protein from Arabidopsis thaliana (Mouse-ear cress).